A 255-amino-acid chain; its full sequence is Glycerol-3-phosphate regulon repressor (255 aa).

In terms of domain architecture, HTH deoR-type spans 3–58 (QSLRHQKIIKLVEQSGYLSTEELVAALDVSPQTIRRDLNILAELDLIRRHHGGAAS). A DNA-binding region (H-T-H motif) is located at residues 20 to 39 (LSTEELVAALDVSPQTIRRD).

Functionally, repressor of the glycerol-3-phosphate regulon. The sequence is that of Glycerol-3-phosphate regulon repressor (glpR) from Haemophilus influenzae (strain ATCC 51907 / DSM 11121 / KW20 / Rd).